Consider the following 205-residue polypeptide: MTSAIGNKDMAAPQRVAALNRPNMVSVGTIVFLSQELMFFAGLFAMYFTSRANGIGNGSWKEGAHHLNVPYALVITIILISSSVTAQFGVFAAERGDVFGVRRWFSLTILLGAIFLVGQAYEYFHLVEHGMTIQSSVYGSSFFITTGFHAAHVLAGALAFVVVLLRLSKSKFTPAQATAAMVVSYYWHFVDVVWIGLFITIYFIQ.

Helical transmembrane passes span 28–48, 72–92, 104–124, 142–162, and 184–204; these read GTIV…AMYF, ALVI…GVFA, WFSL…YEYF, FFIT…AFVV, and SYYW…IYFI.

The protein belongs to the cytochrome c oxidase subunit 3 family. As to quaternary structure, associates with subunits I, II and IV to form cytochrome c oxidase.

It is found in the cell membrane. It catalyses the reaction 4 Fe(II)-[cytochrome c] + O2 + 8 H(+)(in) = 4 Fe(III)-[cytochrome c] + 2 H2O + 4 H(+)(out). The sequence is that of Cytochrome c oxidase subunit 3 (ctaE) from Corynebacterium diphtheriae (strain ATCC 700971 / NCTC 13129 / Biotype gravis).